A 256-amino-acid polypeptide reads, in one-letter code: Pimeloyl-[acyl-carrier protein] methyl ester esterase (256 aa).

Positions His-15–Pro-242 constitute an AB hydrolase-1 domain. Substrate is bound by residues Trp-22, Ser-82–Leu-83, and Phe-143–Gln-147. Catalysis depends on Ser-82, which acts as the Nucleophile. Active-site residues include Asp-207 and His-235. Position 235 (His-235) interacts with substrate.

It belongs to the AB hydrolase superfamily. Carboxylesterase BioH family. Monomer.

The protein localises to the cytoplasm. The enzyme catalyses 6-carboxyhexanoyl-[ACP] methyl ester + H2O = 6-carboxyhexanoyl-[ACP] + methanol + H(+). It participates in cofactor biosynthesis; biotin biosynthesis. Its function is as follows. The physiological role of BioH is to remove the methyl group introduced by BioC when the pimeloyl moiety is complete. It allows to synthesize pimeloyl-ACP via the fatty acid synthetic pathway through the hydrolysis of the ester bonds of pimeloyl-ACP esters. This chain is Pimeloyl-[acyl-carrier protein] methyl ester esterase, found in Shigella boydii serotype 18 (strain CDC 3083-94 / BS512).